The following is a 607-amino-acid chain: UvrABC system protein C (607 aa).

The GIY-YIG domain occupies 16–94 (GRPGVYRMFD…IKEWRPPYNI (79 aa)). Positions 203–238 (NALTDELSTAMEAAASTLDFEKAAELRDQISLLRRV) constitute a UVR domain.

This sequence belongs to the UvrC family. As to quaternary structure, interacts with UvrB in an incision complex.

The protein resides in the cytoplasm. Functionally, the UvrABC repair system catalyzes the recognition and processing of DNA lesions. UvrC both incises the 5' and 3' sides of the lesion. The N-terminal half is responsible for the 3' incision and the C-terminal half is responsible for the 5' incision. The protein is UvrABC system protein C of Pseudomonas fluorescens (strain ATCC BAA-477 / NRRL B-23932 / Pf-5).